A 154-amino-acid polypeptide reads, in one-letter code: Myoglobin (154 aa).

The Globin domain maps to 2 to 148; it reads GLSDGEWQLV…FRKDMASNYK (147 aa). A Phosphoserine modification is found at serine 4. A nitrite-binding site is contributed by histidine 65. Histidine 65 provides a ligand contact to O2. The residue at position 68 (threonine 68) is a Phosphothreonine. Histidine 94 is a binding site for heme b.

The protein belongs to the globin family. In terms of assembly, monomeric.

It localises to the cytoplasm. Its subcellular location is the sarcoplasm. It carries out the reaction Fe(III)-heme b-[protein] + nitric oxide + H2O = Fe(II)-heme b-[protein] + nitrite + 2 H(+). The catalysed reaction is H2O2 + AH2 = A + 2 H2O. Monomeric heme protein which primary function is to store oxygen and facilitate its diffusion within muscle tissues. Reversibly binds oxygen through a pentacoordinated heme iron and enables its timely and efficient release as needed during periods of heightened demand. Depending on the oxidative conditions of tissues and cells, and in addition to its ability to bind oxygen, it also has a nitrite reductase activity whereby it regulates the production of bioactive nitric oxide. Under stress conditions, like hypoxia and anoxia, it also protects cells against reactive oxygen species thanks to its pseudoperoxidase activity. This is Myoglobin from Homo sapiens (Human).